Consider the following 198-residue polypeptide: Large ribosomal subunit protein bL12m (198 aa).

A mitochondrion-targeting transit peptide spans 1-36; that stretch reads MLPAAARPLWGPCLGLRAAAFRLARRQVPCVCAVRH. Residues Lys125, Lys138, Lys142, and Lys144 each carry the N6-acetyllysine modification. Lys150 is subject to N6-acetyllysine; alternate. The residue at position 150 (Lys150) is an N6-succinyllysine; alternate. Lys150 is covalently cross-linked (Glycyl lysine isopeptide (Lys-Gly) (interchain with G-Cter in ubiquitin)). An N6-succinyllysine modification is found at Lys162. N6-acetyllysine is present on residues Lys163 and Lys173. N6-acetyllysine; alternate is present on Lys178. At Lys178 the chain carries N6-succinyllysine; alternate. Lys185 carries the post-translational modification N6-acetyllysine.

It belongs to the bacterial ribosomal protein bL12 family. Component of the mitochondrial large ribosomal subunit (mt-LSU). Mature mammalian 55S mitochondrial ribosomes consist of a small (28S) and a large (39S) subunit. The 28S small subunit contains a 12S ribosomal RNA (12S mt-rRNA) and 30 different proteins. The 39S large subunit contains a 16S rRNA (16S mt-rRNA), a copy of mitochondrial valine transfer RNA (mt-tRNA(Val)), which plays an integral structural role, and 52 different proteins. bL12m interacts with NOA1. In terms of processing, two mature forms are produced by differential two-step proteolytic cleavage. Cleaved by the mitochondrial processing protease to produce the long mature form and subsequently by the mitochondrial intermediate protease to produce the short mature form. Post-translationally, in the presence of CUL3, undergoes 'Lys-63'-linked ubiquitination at Lys-150 which results in proteasomal degradation.

Its subcellular location is the mitochondrion matrix. Its function is as follows. As a component of the mitochondrial large ribosomal subunit, plays a role in mitochondrial translation. When present in mitochondria as a free protein not associated with the ribosome, associates with mitochondrial RNA polymerase POLRMT to activate transcription. Required for POLRMT stability. This chain is Large ribosomal subunit protein bL12m (MRPL12), found in Homo sapiens (Human).